The sequence spans 158 residues: Transcription elongation factor GreA (158 aa).

Belongs to the GreA/GreB family.

Functionally, necessary for efficient RNA polymerase transcription elongation past template-encoded arresting sites. The arresting sites in DNA have the property of trapping a certain fraction of elongating RNA polymerases that pass through, resulting in locked ternary complexes. Cleavage of the nascent transcript by cleavage factors such as GreA or GreB allows the resumption of elongation from the new 3'terminus. GreA releases sequences of 2 to 3 nucleotides. The chain is Transcription elongation factor GreA from Psychrobacter sp. (strain PRwf-1).